The primary structure comprises 378 residues: UPF0754 membrane protein BCA_0919 (378 aa).

2 helical membrane passes run 1–21 (MNIW…GGFT) and 357–377 (YLGA…LLFL).

It belongs to the UPF0754 family.

It is found in the cell membrane. In Bacillus cereus (strain 03BB102), this protein is UPF0754 membrane protein BCA_0919.